The following is an 800-amino-acid chain: Leukocyte receptor cluster member 8 homolog (800 aa).

Disordered regions lie at residues 118-149, 175-229, 245-273, 335-394, and 407-519; these read NYQS…MSYS, PCIQ…GFKF, SSEH…PQQQ, TIDW…GRGS, and KESS…HGHG. 2 stretches are compositionally biased toward low complexity: residues 120–131 and 184–201; these read QSMSSQSGQHQG and NQSN…SQQS. Positions 252–261 are enriched in polar residues; sequence SAGQQQQQAT. Residues 338–352 are compositionally biased toward basic and acidic residues; it reads WSREPLPGKDGGKES. The span at 360-387 shows a compositional bias: polar residues; it reads QTTLQTSHGSTITITQSPRGGGNSTNAA. The segment covering 409 to 418 has biased composition (low complexity); that stretch reads SSSSSSAGSR. Composition is skewed to basic residues over residues 419-433 and 508-519; these read SRSR…RRYR and EKRAARFQHGHG. In terms of domain architecture, PCI spans 636–800; that stretch reads DHEEFNQCQA…KLSLAVLPNI (165 aa).

This is Leukocyte receptor cluster member 8 homolog (leng8) from Xenopus laevis (African clawed frog).